We begin with the raw amino-acid sequence, 442 residues long: Protein translocase subunit SecF (442 aa).

The disordered stretch occupies residues 1–39 (MASKAKTGRDDEATSAVELTEATESAVARTDGDSTTDTA). The next 6 helical transmembrane spans lie at 67 to 87 (WFGVSGAIVAVAIASIVFRGF), 187 to 207 (ITKKAVIALVVFLVLVALYIT), 218 to 238 (AITAMLFDLTVTAGVYSLVGF), 243 to 263 (ATVIGLLTILGFSLYDTVIVF), 301 to 321 (LIGVLPVLALMLVAVWLLGVG), and 331 to 351 (LIGIIIGTYSSIFFATPLLVT). The tract at residues 366–442 (VLKRRNSGSP…PTGKRNAGRR (77 aa)) is disordered. Residues 402-432 (QASSQSAPRAAQGSSKPAPGARPVRPVGTRR) show a composition bias toward low complexity. Over residues 433-442 (PTGKRNAGRR) the composition is skewed to basic residues.

Belongs to the SecD/SecF family. SecF subfamily. Forms a complex with SecD. Part of the essential Sec protein translocation apparatus which comprises SecA, SecYEG and auxiliary proteins SecDF. Other proteins may also be involved.

Its subcellular location is the cell membrane. In terms of biological role, part of the Sec protein translocase complex. Interacts with the SecYEG preprotein conducting channel. SecDF uses the proton motive force (PMF) to complete protein translocation after the ATP-dependent function of SecA. In Mycobacterium tuberculosis (strain CDC 1551 / Oshkosh), this protein is Protein translocase subunit SecF.